The sequence spans 204 residues: Probable GTP-binding protein EngB (204 aa).

Positions 23–195 constitute an EngB-type G domain; that stretch reads TLPEIAFVGR…ASALMQLLAM (173 aa). Residues 31-38, 58-62, 76-79, 143-146, and 174-176 each bind GTP; these read GRSNVGKS, GRTRE, DLPG, TKID, and FSA. Positions 38 and 60 each coordinate Mg(2+).

It belongs to the TRAFAC class TrmE-Era-EngA-EngB-Septin-like GTPase superfamily. EngB GTPase family. Mg(2+) serves as cofactor.

In terms of biological role, necessary for normal cell division and for the maintenance of normal septation. The sequence is that of Probable GTP-binding protein EngB from Gemmatimonas aurantiaca (strain DSM 14586 / JCM 11422 / NBRC 100505 / T-27).